A 177-amino-acid polypeptide reads, in one-letter code: Ribosome maturation factor RimM (177 aa).

The PRC barrel domain occupies 96–177 (DNEFYWVDLI…KITVDWGLDY (82 aa)).

It belongs to the RimM family. In terms of assembly, binds ribosomal protein uS19.

It is found in the cytoplasm. Its function is as follows. An accessory protein needed during the final step in the assembly of 30S ribosomal subunit, possibly for assembly of the head region. Essential for efficient processing of 16S rRNA. May be needed both before and after RbfA during the maturation of 16S rRNA. It has affinity for free ribosomal 30S subunits but not for 70S ribosomes. This Herminiimonas arsenicoxydans protein is Ribosome maturation factor RimM.